The following is a 67-amino-acid chain: Beta-defensin 103 (67 aa).

The signal sequence occupies residues 1 to 22 (MRIHYLLFALLFLFLVPVPGHG). Intrachain disulfides connect Cys33/Cys62, Cys40/Cys55, and Cys45/Cys63.

In terms of tissue distribution, highly expressed in skin and tonsils, and to a lesser extent in trachea, uterus, kidney, thymus, adenoid, pharynx and tongue. Low expression in salivary gland, bone marrow, colon, stomach, polyp and larynx. No expression in small intestine.

It localises to the secreted. Its function is as follows. Exhibits antimicrobial activity against Gram-positive bacteria S.aureus and S.pyogenes, Gram-negative bacteria P.aeruginosa and E.coli and the yeast C.albicans. Kills multiresistant S.aureus and vancomycin-resistant E.faecium. No significant hemolytic activity was observed. The protein is Beta-defensin 103 (DEFB103A) of Homo sapiens (Human).